The following is a 321-amino-acid chain: Lambda-crystallin homolog (321 aa).

At S6 the chain carries Phosphoserine. NAD(+) contacts are provided by residues 19–20 (LI), D39, E100, and K105.

Belongs to the 3-hydroxyacyl-CoA dehydrogenase family. Homodimer.

The protein localises to the cytoplasm. The catalysed reaction is L-gulonate + NAD(+) = 3-dehydro-L-gulonate + NADH + H(+). Its activity is regulated as follows. Inhibited by malonate. Has high L-gulonate 3-dehydrogenase activity. It also exhibits low dehydrogenase activity toward L-3-hydroxybutyrate (HBA) and L-threonate. This chain is Lambda-crystallin homolog (CRYL1), found in Bos taurus (Bovine).